Reading from the N-terminus, the 275-residue chain is Large ribosomal subunit protein uL2 (275 aa).

Disordered stretches follow at residues 28–59 (KPFA…GGHK) and 224–275 (AMNP…RHKR). Residues 35–49 (DSQSTTAGRNNNGHI) are compositionally biased toward polar residues. Residues 50 to 59 (TTRHKGGGHK) are compositionally biased toward basic residues.

Belongs to the universal ribosomal protein uL2 family. In terms of assembly, part of the 50S ribosomal subunit. Forms a bridge to the 30S subunit in the 70S ribosome.

One of the primary rRNA binding proteins. Required for association of the 30S and 50S subunits to form the 70S ribosome, for tRNA binding and peptide bond formation. It has been suggested to have peptidyltransferase activity; this is somewhat controversial. Makes several contacts with the 16S rRNA in the 70S ribosome. This Paraburkholderia xenovorans (strain LB400) protein is Large ribosomal subunit protein uL2.